We begin with the raw amino-acid sequence, 105 residues long: Nucleoid-associated protein PTH_0052 (105 aa).

It belongs to the YbaB/EbfC family. In terms of assembly, homodimer.

It is found in the cytoplasm. Its subcellular location is the nucleoid. Functionally, binds to DNA and alters its conformation. May be involved in regulation of gene expression, nucleoid organization and DNA protection. This Pelotomaculum thermopropionicum (strain DSM 13744 / JCM 10971 / SI) protein is Nucleoid-associated protein PTH_0052.